Reading from the N-terminus, the 92-residue chain is N(2)-fixation sustaining protein CowN (92 aa).

The protein belongs to the CowN family.

Its function is as follows. Is required to sustain N(2)-dependent growth in the presence of low levels of carbon monoxide (CO). Probably acts by protecting the N(2) fixation ability of the nitrogenase complex, which is inactivated in the presence of CO. The chain is N(2)-fixation sustaining protein CowN from Rhodopseudomonas palustris (strain BisA53).